The following is a 409-amino-acid chain: NADH-quinone oxidoreductase subunit D 1 (409 aa).

It belongs to the complex I 49 kDa subunit family. NDH-1 is composed of 14 different subunits. Subunits NuoB, C, D, E, F, and G constitute the peripheral sector of the complex.

The protein resides in the cell inner membrane. The enzyme catalyses a quinone + NADH + 5 H(+)(in) = a quinol + NAD(+) + 4 H(+)(out). Functionally, NDH-1 shuttles electrons from NADH, via FMN and iron-sulfur (Fe-S) centers, to quinones in the respiratory chain. The immediate electron acceptor for the enzyme in this species is believed to be ubiquinone. Couples the redox reaction to proton translocation (for every two electrons transferred, four hydrogen ions are translocated across the cytoplasmic membrane), and thus conserves the redox energy in a proton gradient. In Solibacter usitatus (strain Ellin6076), this protein is NADH-quinone oxidoreductase subunit D 1.